Reading from the N-terminus, the 143-residue chain is MKPLCLVFGLCVLIGCFLSSECQRGFRGQHDPTRPLSPSNPSSHFYPQPDPNRVQISQPDNIPIFMFEQPHSLNICVPPPPLYLGEEFEKLPPNTHIPYILIRPDIEPPSKYIQPVPRKKSNATPAANNFITTATAPNSTDSF.

The N-terminal stretch at methionine 1 to cysteine 22 is a signal peptide. 2 disordered regions span residues glycine 28–asparagine 52 and valine 116–phenylalanine 143. Polar residues-rich tracts occupy residues leucine 36–phenylalanine 45 and asparagine 122–phenylalanine 143.

The protein resides in the secreted. In terms of biological role, may play a role in protection or detoxification. This chain is Submaxillary gland androgen-regulated protein 2, isoform delta (Smr2), found in Mus musculus (Mouse).